Reading from the N-terminus, the 808-residue chain is Probable inorganic carbon transporter subunit DabA (808 aa).

Cys-335, Asp-337, His-497, and Cys-512 together coordinate Zn(2+).

This sequence belongs to the inorganic carbon transporter (TC 9.A.2) DabA family. Forms a complex with DabB. Requires Zn(2+) as cofactor.

It localises to the cell inner membrane. Functionally, part of an energy-coupled inorganic carbon pump. This is Probable inorganic carbon transporter subunit DabA from Rhodopseudomonas palustris (strain ATCC BAA-98 / CGA009).